The primary structure comprises 991 residues: Adhesion G-protein coupled receptor F3 (991 aa).

The N-terminal stretch at 1-20 is a signal peptide; the sequence is MSSLALSQLLLAVTLPLLEL. Over 21–694 the chain is Extracellular; it reads EPTFVPTAQS…ENPTLDLLSQ (674 aa). N75, N102, N118, N321, N362, N484, N571, N589, N630, and N660 each carry an N-linked (GlcNAc...) asparagine glycan. In terms of domain architecture, GAIN-B spans 519 to 684; the sequence is HPFSFSSANV…SILMSQHTVP (166 aa). Disulfide bonds link C635–C666 and C654–C668. The GPS stretch occupies residues 635 to 684; sequence CVFWDHRVFQGQGGWSDEGCEVHAANASITQCICQHLTAFSILMSQHTVP. The helical transmembrane segment at 695-715 threads the bilayer; it reads VGTGASVLALLVCLAIYGLVW. The Cytoplasmic segment spans residues 716-730; the sequence is RVVVRNKVAFFRHTT. A helical transmembrane segment spans residues 731–751; it reads LFNMVICLLVADTCFLGSPFL. Over 752–757 the chain is Extracellular; the sequence is PSGYHS. The chain crosses the membrane as a helical span at residues 758 to 778; the sequence is LICLVTAFLCHFFYLATFFWM. Topologically, residues 779 to 799 are cytoplasmic; that stretch reads LAQALVLAHQLLFVFHQLSKH. Residues 800–820 form a helical membrane-spanning segment; that stretch reads VVLSLMVMLGYLCPLGFAGVT. At 821-850 the chain is on the extracellular side; the sequence is LGLYLPQRKYLWEGKCFLNGGGVMLYSFSE. A helical membrane pass occupies residues 851–871; that stretch reads PVLAIVGVNGLVLVIAVLKLL. Over 872–892 the chain is Cytoplasmic; it reads RPSLSEGPTVEKRQALVGVLK. The chain crosses the membrane as a helical span at residues 893-913; sequence ALLILTPIFGLTWGLGVATLF. The Extracellular segment spans residues 914–916; that stretch reads DGS. Residues 917-937 traverse the membrane as a helical segment; sequence IVSHYAFSILNSLQGVFILVF. The Cytoplasmic segment spans residues 938–991; sequence GCLTDKKVLEALRKRLRGSRSSNSAISMVTNETYTSEHSKERSEPASYEERMTD. The interval 964–991 is disordered; that stretch reads SMVTNETYTSEHSKERSEPASYEERMTD. The segment covering 972–991 has biased composition (basic and acidic residues); that stretch reads TSEHSKERSEPASYEERMTD.

It belongs to the G-protein coupled receptor 2 family. Adhesion G-protein coupled receptor (ADGR) subfamily. In terms of assembly, heterodimer of 2 chains generated by proteolytic processing; the large extracellular N-terminal fragment and the membrane-bound C-terminal fragment predominantly remain associated and non-covalently linked. Autoproteolytically processed at the GPS region of the GAIN-B domain; this cleavage modulates receptor activity. In terms of tissue distribution, expression is restricted to testis and circumvallate papillae.

It is found in the membrane. Orphan receptor. The polypeptide is Adhesion G-protein coupled receptor F3 (ADGRF3) (Mus musculus (Mouse)).